The following is a 206-amino-acid chain: Geminin (206 aa).

The segment covering 1–18 (MNLSMKQKQEGAQENVKN) has biased composition (polar residues). The disordered stretch occupies residues 1 to 42 (MNLSMKQKQEGAQENVKNSPVPRRTLKMIQPSADGSLVGREN). Lys-27 carries the N6-acetyllysine modification. 3 positions are modified to phosphoserine: Ser-36, Ser-63, and Ser-64. Residues 79 to 158 (TQEAFDLISK…AEVIERLSNE (80 aa)) form a necessary and sufficient for interaction with IDAS and CDT1 region. A coiled-coil region spans residues 91 to 141 (PSSQYWKEVAEQRRKALYEALKENEKLHKEIEQKDSEIARLRKENKDLAEV). Residues 157–206 (NEPLDNFESPDSQEFDSEEEAVEYSELEDSGAGTCAEETVSSSTDARPCT) are disordered. The span at 167 to 185 (DSQEFDSEEEAVEYSELED) shows a compositional bias: acidic residues. Residues 167–187 (DSQEFDSEEEAVEYSELEDSG) form a homeodomain binding region. Ser-181 carries the post-translational modification Phosphoserine; by CK2. Positions 195–206 (TVSSSTDARPCT) are enriched in polar residues.

The protein belongs to the geminin family. Homotetramer. Interacts with CDT1; this inhibits binding of the MCM complex to origins of replication. The complex with CDT1 exists in two forms, a 'permissive' heterotrimer and an 'inhibitory' heterohexamer. Interacts (via coiled-coil domain) with IDAS (via coiled-coil domain); this targets GMNN to the nucleus. The heterodimer formed by GMNN and MCIDAS has much lower affinity for CDT1 than the GMNN homodimer. Interacts with a subset of Hox proteins, affinity increasing from anterior to posterior types, the strongest interaction being with HOXB1, HOXC9 and HOXD10. Interacts with LRWD1 from G1/S to mitosis. Post-translationally, phosphorylated during mitosis. Phosphorylation at Ser-181 by CK2 results in enhanced binding to Hox proteins and more potent inhibitory effect on Hox transcriptional activity.

The protein localises to the cytoplasm. It is found in the nucleus. Its function is as follows. Inhibits DNA replication by preventing the incorporation of MCM complex into pre-replication complex (pre-RC). It is degraded during the mitotic phase of the cell cycle. Its destruction at the metaphase-anaphase transition permits replication in the succeeding cell cycle. Inhibits histone acetyltransferase activity of KAT7/HBO1 in a CDT1-dependent manner, inhibiting histone H4 acetylation and DNA replication licensing. Inhibits the transcriptional activity of a subset of Hox proteins, enrolling them in cell proliferative control. The protein is Geminin (Gmnn) of Mus musculus (Mouse).